Reading from the N-terminus, the 141-residue chain is Large ribosomal subunit protein uL16 (141 aa).

It belongs to the universal ribosomal protein uL16 family. As to quaternary structure, part of the 50S ribosomal subunit.

In terms of biological role, binds 23S rRNA and is also seen to make contacts with the A and possibly P site tRNAs. In Campylobacter lari (strain RM2100 / D67 / ATCC BAA-1060), this protein is Large ribosomal subunit protein uL16.